The primary structure comprises 1347 residues: Spermatogenesis-associated protein 31A7 (1347 aa).

Residues 23–43 (PWVLDIFLTLVFALGFFFLLL) form a helical membrane-spanning segment. 7 disordered regions span residues 55 to 88 (PSPSPGKRKCPVGRRRRPRGRMKNHSLRAGRECP), 106 to 233 (GPHL…RDST), 374 to 397 (QDTTNPKPFWNMGENSKQLPGPQK), 628 to 658 (DESPGTSQAKGKPSPWQSSMSTGESSKEAQK), 900 to 955 (RGIP…REAV), 1084 to 1161 (VHEE…PSVS), and 1313 to 1335 (KAVSPVSPPQHWPKTSGASSHHH). Over residues 60 to 82 (GKRKCPVGRRRRPRGRMKNHSLR) the composition is skewed to basic residues. Residues 165 to 178 (LASTPSPGPMTTSV) are compositionally biased toward polar residues. The segment covering 198–211 (PEPPALFPHPPHTP) has biased composition (pro residues). Polar residues-rich tracts occupy residues 631 to 651 (PGTSQAKGKPSPWQSSMSTGE) and 927 to 948 (LTYSLTGSIQQSRSLGAQSSKA). Composition is skewed to basic and acidic residues over residues 1108–1127 (HKSEKSRKPNLEKHEERLEG) and 1137–1146 (RKTEDTHQDE).

It belongs to the SPATA31 family.

The protein localises to the membrane. Its function is as follows. May play a role in spermatogenesis. The polypeptide is Spermatogenesis-associated protein 31A7 (Homo sapiens (Human)).